The primary structure comprises 1466 residues: Adhesion G protein-coupled receptor L1 (1466 aa).

The N-terminal stretch at 1–28 is a signal peptide; sequence MARLAAALWSLCVTTVLVTSATQGLSRA. Over 29–852 the chain is Extracellular; it reads GLPFGLMRRE…EIYQGRINEL (824 aa). The 90-residue stretch at 40-129 folds into the SUEL-type lectin domain; the sequence is ACEGYPIELR…KYLEVQYDCV (90 aa). 5 cysteine pairs are disulfide-bonded: Cys41-Cys71, Cys50-Cys128, Cys83-Cys115, Cys96-Cys102, and Cys135-Cys317. Residue Glu42 coordinates alpha-L-rhamnose. A glycan (N-linked (GlcNAc...) asparagine) is linked at Asn98. An alpha-L-rhamnose-binding site is contributed by 117–120; that stretch reads GTYK. In terms of domain architecture, Olfactomedin-like spans 134 to 393; sequence VCPGTLQKVL…VVRYSLEFGP (260 aa). The tract at residues 395–463 is disordered; it reads DPSAGPATSP…APAPSTRRPP (69 aa). The span at 400–436 shows a compositional bias: low complexity; that stretch reads PATSPPLSTTTTARPTPLTSTASPAATTPLRRAPLTT. The segment covering 448–463 has biased composition (pro residues); sequence DLPPATAPAPSTRRPP. Cystine bridges form between Cys475-Cys510 and Cys498-Cys527. Residues Asn526, Asn635, Asn736, Asn795, Asn800, and Asn821 are each glycosylated (N-linked (GlcNAc...) asparagine). Positions 664–845 constitute a GAIN-B domain; the sequence is PARFLAAKQN…AVLMAHREIY (182 aa). 2 disulfide bridges follow: Cys796–Cys827 and Cys815–Cys829. The GPS stretch occupies residues 796-845; the sequence is CSFWNYSERSMLGYWSTQGCRLVESNKTHTTCACSHLTNFAVLMAHREIY. A helical transmembrane segment spans residues 853 to 873; sequence LLSVITWVGIVISLVCLAICI. At 874-887 the chain is on the cytoplasmic side; the sequence is STFCFLRGLQTDRN. Residues 888–908 form a helical membrane-spanning segment; that stretch reads TIHKNLCINLFLAELLFLVGI. The Extracellular portion of the chain corresponds to 909–914; it reads DKTQYE. Residues 915–935 traverse the membrane as a helical segment; that stretch reads VACPIFAGLLHYFFLAAFSWL. Over 936-958 the chain is Cytoplasmic; the sequence is CLEGVHLYLLLVEVFESEYSRTK. Residues 959 to 979 form a helical membrane-spanning segment; the sequence is YYYLGGYCFPALVVGIAAAID. Topologically, residues 980–996 are extracellular; the sequence is YRSYGTEKACWLRVDNY. The helical transmembrane segment at 997-1017 threads the bilayer; sequence FIWSFIGPVSFVIVVNLVFLM. Residues 1018–1044 lie on the Cytoplasmic side of the membrane; that stretch reads VTLHKMIRSSSVLKPDSSRLDNIKSWA. The chain crosses the membrane as a helical span at residues 1045–1065; that stretch reads LGAIALLFLLGLTWAFGLLFI. Residues 1066–1069 lie on the Extracellular side of the membrane; that stretch reads NKES. The helical transmembrane segment at 1070–1090 threads the bilayer; that stretch reads VVMAYLFTTFNAFQGVFIFVF. Over 1091–1466 the chain is Cytoplasmic; it reads HCALQKKVHK…DGQMQLVTSL (376 aa). Arg1188 is subject to Omega-N-methylarginine. Ser1214 carries the post-translational modification Phosphoserine. 4 disordered regions span residues 1242–1267, 1288–1319, 1352–1421, and 1443–1466; these read FNNS…RGRN, RGAS…GPGS, ESES…SRPP, and YLAA…VTSL. A compositionally biased stretch (pro residues) spans 1296 to 1307; sequence GPPPEPPVPPVP. Position 1319 is a phosphoserine (Ser1319). Pro residues predominate over residues 1400–1412; that stretch reads ALPPPPPAPPGPP. Phosphoserine occurs at positions 1448 and 1465.

The protein belongs to the G-protein coupled receptor 2 family. Adhesion G-protein coupled receptor (ADGR) subfamily. Forms a heterodimer, consisting of a large extracellular region (p120) non-covalently linked to a seven-transmembrane moiety (p85). Interacts with syntaxin and with proteins of the SHANK family via the PDZ domain. Interacts (via extracellular domain) with FLRT1, FLRT2 and FLRT3 (via extracellular domain). Post-translationally, autoproteolytically cleaved into 2 subunits, an extracellular subunit and a seven-transmembrane subunit. This proteolytic processing takes place early in the biosynthetic pathway, either in the endoplasmic reticulum or in the early compartment of the Golgi apparatus.

The protein localises to the cell membrane. It localises to the cell projection. Its subcellular location is the axon. It is found in the growth cone. The protein resides in the synapse. The protein localises to the presynaptic cell membrane. It localises to the synaptosome. In terms of biological role, calcium-independent receptor of high affinity for alpha-latrotoxin, an excitatory neurotoxin present in black widow spider venom which triggers massive exocytosis from neurons and neuroendocrine cells. Receptor for TENM2 that mediates heterophilic synaptic cell-cell contact and postsynaptic specialization. Receptor probably implicated in the regulation of exocytosis. The polypeptide is Adhesion G protein-coupled receptor L1 (Mus musculus (Mouse)).